The sequence spans 227 residues: Phosphoribosylformylglycinamidine synthase subunit PurQ (227 aa).

The region spanning 3 to 227 is the Glutamine amidotransferase type-1 domain; sequence FAVIVFPGSN…NWRESHVTAS (225 aa). Cys-86 serves as the catalytic Nucleophile. Residues His-194 and Glu-196 contribute to the active site.

As to quaternary structure, part of the FGAM synthase complex composed of 1 PurL, 1 PurQ and 2 PurS subunits.

The protein resides in the cytoplasm. It carries out the reaction N(2)-formyl-N(1)-(5-phospho-beta-D-ribosyl)glycinamide + L-glutamine + ATP + H2O = 2-formamido-N(1)-(5-O-phospho-beta-D-ribosyl)acetamidine + L-glutamate + ADP + phosphate + H(+). The enzyme catalyses L-glutamine + H2O = L-glutamate + NH4(+). It participates in purine metabolism; IMP biosynthesis via de novo pathway; 5-amino-1-(5-phospho-D-ribosyl)imidazole from N(2)-formyl-N(1)-(5-phospho-D-ribosyl)glycinamide: step 1/2. Part of the phosphoribosylformylglycinamidine synthase complex involved in the purines biosynthetic pathway. Catalyzes the ATP-dependent conversion of formylglycinamide ribonucleotide (FGAR) and glutamine to yield formylglycinamidine ribonucleotide (FGAM) and glutamate. The FGAM synthase complex is composed of three subunits. PurQ produces an ammonia molecule by converting glutamine to glutamate. PurL transfers the ammonia molecule to FGAR to form FGAM in an ATP-dependent manner. PurS interacts with PurQ and PurL and is thought to assist in the transfer of the ammonia molecule from PurQ to PurL. The chain is Phosphoribosylformylglycinamidine synthase subunit PurQ from Shouchella clausii (strain KSM-K16) (Alkalihalobacillus clausii).